The following is a 146-amino-acid chain: UPF0260 protein VF_1660 (146 aa).

Belongs to the UPF0260 family.

This is UPF0260 protein VF_1660 from Aliivibrio fischeri (strain ATCC 700601 / ES114) (Vibrio fischeri).